A 358-amino-acid polypeptide reads, in one-letter code: tRNA N6-adenosine threonylcarbamoyltransferase (358 aa).

Residues H111 and H115 each coordinate Fe cation. Residues L146–G150, D179, G192, and N294 contribute to the substrate site. D322 lines the Fe cation pocket.

It belongs to the KAE1 / TsaD family. Fe(2+) serves as cofactor.

The protein resides in the cytoplasm. The catalysed reaction is L-threonylcarbamoyladenylate + adenosine(37) in tRNA = N(6)-L-threonylcarbamoyladenosine(37) in tRNA + AMP + H(+). Functionally, required for the formation of a threonylcarbamoyl group on adenosine at position 37 (t(6)A37) in tRNAs that read codons beginning with adenine. Is involved in the transfer of the threonylcarbamoyl moiety of threonylcarbamoyl-AMP (TC-AMP) to the N6 group of A37, together with TsaE and TsaB. TsaD likely plays a direct catalytic role in this reaction. In Helicobacter hepaticus (strain ATCC 51449 / 3B1), this protein is tRNA N6-adenosine threonylcarbamoyltransferase.